Consider the following 206-residue polypeptide: MTERRVPFSLLRSPSWEPFRDWYPAHSRLFDQAFGVPRFPDEWSQWFSSAGWPGYVRPLPAATAEGPAAVTLARPAFSRALNRQLSSGVSEIRQTADRWRVSLDVNHFAPEELTVKTKEGVVEITGKHEERQDEHGYISRCFTRKYTLPPGVDPTLVSSSLSPEGTLTVEAPLPKAVTQSAEITIPVTFEARAQIGGPESEQSGAK.

Residue Arg-12 is modified to Omega-N-methylarginine. A Phosphoserine modification is found at Ser-13. Ser-15 bears the Phosphoserine; by MAPKAPK2 and MAPKAPK3 mark. Ser-27 is modified (phosphoserine). Residues Arg-74 to Lys-206 are interaction with TGFB1I1. The sHSP domain occupies Ala-80 to Thr-188. Residue Ser-86 is modified to Phosphoserine; by MAPKAPK2, MAPKAPK3 and MAPKAPK5. Ser-87, Ser-90, and Ser-102 each carry phosphoserine. Position 127 is an N6-acetyllysine (Lys-127). At Thr-178 the chain carries Phosphothreonine. 2 positions are modified to phosphoserine: Ser-180 and Ser-200.

This sequence belongs to the small heat shock protein (HSP20) family. Homooligomer. Homodimer; becomes monomeric upon activation. Heterooligomer; with HSPB6. Associates with alpha- and beta-tubulin. Interacts with TGFB1I1. Interacts with CRYAB. Interacts with HSPB8. Interacts with HSPBAP1. Phosphorylated upon exposure to protein kinase C activators and heat shock. Phosphorylation by MAPKAPK2 and MAPKAPK3 in response to stress dissociates HSPB1 from large small heat-shock protein (sHsps) oligomers and impairs its chaperone activity and ability to protect against oxidative stress effectively. Phosphorylation by MAPKAPK5 in response to PKA stimulation induces F-actin rearrangement. In terms of tissue distribution, expressed in a variety of tissues. High levels in lung, adrenal, xiphoid, adipose tissue, heart and striated and smooth muscle, lower levels in the CNS. Adult levels are much higher in the slow-twitch soleus muscle than in the fast-twitch rectus femoris and extensor digitorum muscles.

It is found in the cytoplasm. The protein localises to the nucleus. The protein resides in the cytoskeleton. It localises to the spindle. Functionally, small heat shock protein which functions as a molecular chaperone probably maintaining denatured proteins in a folding-competent state. Plays a role in stress resistance and actin organization. Through its molecular chaperone activity may regulate numerous biological processes including the phosphorylation and the axonal transport of neurofilament proteins. The protein is Heat shock protein beta-1 (Hspb1) of Rattus norvegicus (Rat).